The sequence spans 333 residues: Extracellular globin (333 aa).

The signal sequence occupies residues 1–18 (MHSSIVLAIVLFVAIASA). Globin domains are found at residues 25-167 (CMKS…HHGR) and 174-318 (CMNS…KHAK). Heme b contacts are provided by Gln82 and His114. N-linked (GlcNAc...) asparagine glycosylation occurs at Asn216. Residues Gln231 and His263 each coordinate heme b. The disordered stretch occupies residues 314-333 (DKHAKAEKDHHEGEHKEEHH).

Belongs to the globin family. As to quaternary structure, homooctamer.

The protein localises to the secreted. It localises to the extracellular space. The polypeptide is Extracellular globin (Pseudoterranova decipiens (Sealworm)).